A 127-amino-acid chain; its full sequence is uncharacterized protein (127 aa).

This is an uncharacterized protein from Thermoproteus tenax (TTV1).